The following is a 534-amino-acid chain: Cytochrome c oxidase subunit 1 (534 aa).

A helical transmembrane segment spans residues 16–36 (VLYFIFAIFCGMAGTAMSLII). Ca(2+) is bound by residues Glu39, Ala42, and Gly44. The next 6 membrane-spanning stretches (helical) occupy residues 57 to 77 (VLVV…ALIG), 101 to 121 (ISFW…LVES), 147 to 167 (AIFA…NFIV), 182 to 202 (LPLF…SLPV), 235 to 255 (LFWF…FGII), and 267 to 287 (VFGE…GFLV). His62 lines the Fe(II)-heme a pocket. Position 241 (His241) interacts with Cu cation. Positions 241 to 245 (HPEVY) form a cross-link, 1'-histidyl-3'-tyrosine (His-Tyr). An O2-binding site is contributed by Tyr245. Cu cation-binding residues include His290 and His291. Helical transmembrane passes span 310–330 (MIIA…IYGG) and 338–358 (MLYA…GVAL). Mg(2+) is bound by residues His368 and Asp369. Helical transmembrane passes span 372 to 392 (YVVG…LFAG) and 412 to 432 (IQFW…HFLG). His376 lines the heme a3 pocket. His378 is a binding site for Fe(II)-heme a. A Ca(2+)-binding site is contributed by Pro441. A helical membrane pass occupies residues 452-472 (YVASIGSIIAVFSLFLFIYIL).

Belongs to the heme-copper respiratory oxidase family. Component of the cytochrome c oxidase (complex IV, CIV), a multisubunit enzyme composed of a catalytic core of 3 subunits and several supernumerary subunits. The complex exists as a monomer or a dimer and forms supercomplexes (SCs) in the inner mitochondrial membrane with ubiquinol-cytochrome c oxidoreductase (cytochrome b-c1 complex, complex III, CIII). It depends on heme as a cofactor. Cu cation is required as a cofactor.

Its subcellular location is the mitochondrion inner membrane. It catalyses the reaction 4 Fe(II)-[cytochrome c] + O2 + 8 H(+)(in) = 4 Fe(III)-[cytochrome c] + 2 H2O + 4 H(+)(out). The protein operates within energy metabolism; oxidative phosphorylation. In terms of biological role, component of the cytochrome c oxidase, the last enzyme in the mitochondrial electron transport chain which drives oxidative phosphorylation. The respiratory chain contains 3 multisubunit complexes succinate dehydrogenase (complex II, CII), ubiquinol-cytochrome c oxidoreductase (cytochrome b-c1 complex, complex III, CIII) and cytochrome c oxidase (complex IV, CIV), that cooperate to transfer electrons derived from NADH and succinate to molecular oxygen, creating an electrochemical gradient over the inner membrane that drives transmembrane transport and the ATP synthase. Cytochrome c oxidase is the component of the respiratory chain that catalyzes the reduction of oxygen to water. Electrons originating from reduced cytochrome c in the intermembrane space (IMS) are transferred via the dinuclear copper A center (CU(A)) of subunit 2 and heme A of subunit 1 to the active site in subunit 1, a binuclear center (BNC) formed by heme A3 and copper B (CU(B)). The BNC reduces molecular oxygen to 2 water molecules using 4 electrons from cytochrome c in the IMS and 4 protons from the mitochondrial matrix. The sequence is that of Cytochrome c oxidase subunit 1 (COX1) from Kluyveromyces lactis (strain ATCC 8585 / CBS 2359 / DSM 70799 / NBRC 1267 / NRRL Y-1140 / WM37) (Yeast).